A 190-amino-acid polypeptide reads, in one-letter code: Orotate phosphoribosyltransferase (190 aa).

114–122 is a binding site for 5-phospho-alpha-D-ribose 1-diphosphate; sequence EDVVTTGGS. Residues threonine 118 and arginine 146 each coordinate orotate.

Belongs to the purine/pyrimidine phosphoribosyltransferase family. PyrE subfamily. Homodimer. Mg(2+) serves as cofactor.

It catalyses the reaction orotidine 5'-phosphate + diphosphate = orotate + 5-phospho-alpha-D-ribose 1-diphosphate. It participates in pyrimidine metabolism; UMP biosynthesis via de novo pathway; UMP from orotate: step 1/2. Its function is as follows. Catalyzes the transfer of a ribosyl phosphate group from 5-phosphoribose 1-diphosphate to orotate, leading to the formation of orotidine monophosphate (OMP). The protein is Orotate phosphoribosyltransferase of Caldanaerobacter subterraneus subsp. tengcongensis (strain DSM 15242 / JCM 11007 / NBRC 100824 / MB4) (Thermoanaerobacter tengcongensis).